Reading from the N-terminus, the 117-residue chain is uncharacterized protein (117 aa).

This is an uncharacterized protein from Pasteurella multocida (strain Pm70).